We begin with the raw amino-acid sequence, 198 residues long: MSEVKLTAETRTEFGKGAARRIRRDNKVPGVLYGHGSDPLHLTLPGHELLLALRTSNVLIALDIDGKTNELAIPKSVQRDPIKGFLEHVDLQLVKRGETVSVEIPVQAEGELAPGGFLLEYVLDALPVEAEATHIPQQVTVSVAGLEAGASIHAKDIALPSGVKLDVDGDTVVLQVLSAQAEEAPAEGEGEGEGAAEA.

It belongs to the bacterial ribosomal protein bL25 family. CTC subfamily. As to quaternary structure, part of the 50S ribosomal subunit; part of the 5S rRNA/L5/L18/L25 subcomplex. Contacts the 5S rRNA. Binds to the 5S rRNA independently of L5 and L18.

Its function is as follows. This is one of the proteins that binds to the 5S RNA in the ribosome where it forms part of the central protuberance. The chain is Large ribosomal subunit protein bL25 from Streptomyces coelicolor (strain ATCC BAA-471 / A3(2) / M145).